Consider the following 205-residue polypeptide: Ribosomal RNA small subunit methyltransferase G (205 aa).

Residues glycine 73, leucine 78, valine 124–glutamate 125, and arginine 138 contribute to the S-adenosyl-L-methionine site.

It belongs to the methyltransferase superfamily. RNA methyltransferase RsmG family.

It is found in the cytoplasm. The enzyme catalyses guanosine(527) in 16S rRNA + S-adenosyl-L-methionine = N(7)-methylguanosine(527) in 16S rRNA + S-adenosyl-L-homocysteine. Its function is as follows. Specifically methylates the N7 position of guanine in position 527 of 16S rRNA. The chain is Ribosomal RNA small subunit methyltransferase G from Actinobacillus pleuropneumoniae serotype 5b (strain L20).